A 286-amino-acid chain; its full sequence is Histone H2A.v2 (286 aa).

Residues methionine 1–lysine 26 show a composition bias toward polar residues. The segment at methionine 1–arginine 180 is disordered. Low complexity-rich tracts occupy residues glutamine 44 to threonine 59, glutamine 76 to serine 104, and leucine 115 to serine 138.

It belongs to the histone H2A family.

The protein is Histone H2A.v2 (H2Av2) of Dictyostelium discoideum (Social amoeba).